Consider the following 198-residue polypeptide: ATP-dependent Clp protease proteolytic subunit (198 aa).

The Nucleophile role is filled by Ser-101. His-126 is a catalytic residue.

This sequence belongs to the peptidase S14 family. As to quaternary structure, component of the chloroplastic Clp protease core complex.

Its subcellular location is the plastid. It localises to the chloroplast stroma. It carries out the reaction Hydrolysis of proteins to small peptides in the presence of ATP and magnesium. alpha-casein is the usual test substrate. In the absence of ATP, only oligopeptides shorter than five residues are hydrolyzed (such as succinyl-Leu-Tyr-|-NHMec, and Leu-Tyr-Leu-|-Tyr-Trp, in which cleavage of the -Tyr-|-Leu- and -Tyr-|-Trp bonds also occurs).. In terms of biological role, cleaves peptides in various proteins in a process that requires ATP hydrolysis. Has a chymotrypsin-like activity. Plays a major role in the degradation of misfolded proteins. The polypeptide is ATP-dependent Clp protease proteolytic subunit (Solanum bulbocastanum (Wild potato)).